A 364-amino-acid chain; its full sequence is MNDEINEPPPNICEQCLGDEANIRMTKIPQGSECKICTLPFTLYHFKTSKRSNNIIKTLICVRCATQRNICQCCMLDSRWHIPIQLRDHLISLVNEENVMTEEAKNDMMKRFLSLKNVKLGGAQITSDPSEADNIVDKLKNILLRATSDGPSTPLIKNTTALYKNEKGANEVKNLEKYASVDISHILKKLPLNESFLKNPSTKSFFLYNIDASIPEWKITDTVSQLLGIKKWKDGNSLSLIVNHKAKCGGLRFQSSELGERFVSKISETLVTPKGLKRGVLLIDRFRIFIIPWSSGFSAASFGTNTAENIKLSLSLNKLIQLELGLSFPTKSTDNAKNDKKKTSKKVHKDRSKKSKPRANKLTI.

The tract at residues K331–I364 is disordered. The segment covering D339–I364 has biased composition (basic residues).

The protein belongs to the SLT11 family. In terms of assembly, belongs to the CWC complex (or CEF1-associated complex), a spliceosome subcomplex composed of the U2, U5 and U6 snRNAs and at least BUD13, BUD31, BRR2, CDC40, CEF1, CLF1, CUS1, CWC2, CWC15, CWC21, CWC22, CWC23, CWC24, CWC25, CWC27, ECM2, HSH155, IST3, ISY1, LEA1, MSL1, NTC20, PRP8, PRP9, PRP11, PRP19, PRP21, PRP22, PRP45, PRP46, SLU7, SMB1, SMD1, SMD2, SMD3, SMX2, SMX3, SNT309, SNU114, SPP2, SYF1, SYF2, RSE1 and YJU2. Interacts with SLU7.

It is found in the nucleus. Involved in pre-mRNA splicing. Facilitates the cooperative formation of U2/U6 helix II in association with stem II in the spliceosome. Binds to RNA. This chain is Pre-mRNA-splicing factor SLT11 (ECM2), found in Saccharomyces cerevisiae (strain ATCC 204508 / S288c) (Baker's yeast).